A 208-amino-acid chain; its full sequence is 3-demethoxyubiquinol 3-hydroxylase (208 aa).

Residues Glu57, Glu87, His90, Glu139, Glu171, and His174 each coordinate Fe cation.

Belongs to the COQ7 family. Fe cation is required as a cofactor.

Its subcellular location is the cell membrane. The enzyme catalyses a 5-methoxy-2-methyl-3-(all-trans-polyprenyl)benzene-1,4-diol + AH2 + O2 = a 3-demethylubiquinol + A + H2O. The protein operates within cofactor biosynthesis; ubiquinone biosynthesis. In terms of biological role, catalyzes the hydroxylation of 2-nonaprenyl-3-methyl-6-methoxy-1,4-benzoquinol during ubiquinone biosynthesis. The chain is 3-demethoxyubiquinol 3-hydroxylase from Burkholderia cenocepacia (strain ATCC BAA-245 / DSM 16553 / LMG 16656 / NCTC 13227 / J2315 / CF5610) (Burkholderia cepacia (strain J2315)).